The chain runs to 160 residues: SsrA-binding protein (160 aa).

Residues 133–160 (GKKLHDKRDTEKERDWKREQQRLLRDRG) are disordered. Over residues 138 to 160 (DKRDTEKERDWKREQQRLLRDRG) the composition is skewed to basic and acidic residues.

Belongs to the SmpB family.

It is found in the cytoplasm. Required for rescue of stalled ribosomes mediated by trans-translation. Binds to transfer-messenger RNA (tmRNA), required for stable association of tmRNA with ribosomes. tmRNA and SmpB together mimic tRNA shape, replacing the anticodon stem-loop with SmpB. tmRNA is encoded by the ssrA gene; the 2 termini fold to resemble tRNA(Ala) and it encodes a 'tag peptide', a short internal open reading frame. During trans-translation Ala-aminoacylated tmRNA acts like a tRNA, entering the A-site of stalled ribosomes, displacing the stalled mRNA. The ribosome then switches to translate the ORF on the tmRNA; the nascent peptide is terminated with the 'tag peptide' encoded by the tmRNA and targeted for degradation. The ribosome is freed to recommence translation, which seems to be the essential function of trans-translation. The chain is SsrA-binding protein from Rhizorhabdus wittichii (strain DSM 6014 / CCUG 31198 / JCM 15750 / NBRC 105917 / EY 4224 / RW1) (Sphingomonas wittichii).